The chain runs to 375 residues: Trichodiene synthase (375 aa).

This sequence belongs to the trichodiene synthase family.

It carries out the reaction (2E,6E)-farnesyl diphosphate = trichodiene + diphosphate. It participates in sesquiterpene biosynthesis; trichothecene biosynthesis. Functionally, TS is a member of the terpene cyclase group of enzymes. It catalyzes the isomerization and cyclization of farnesyl pyro-phosphate to form trichodiene, the first cyclic intermediate in the biosynthetic pathway for trichothecenes. It serves to branch trichothecene biosynthesis from the isoprenoid pathway. The polypeptide is Trichodiene synthase (TRI5) (Fusarium culmorum).